Consider the following 254-residue polypeptide: MNRRRRIYEGKAKILYEGPEPGTLIQFFKDDATAFNKKKHDVIDGKGVLNNRISEYIFTHLNKIGIPTHFIRRLNMREQLIKEVEIIPLEIVVRNVAAGSLAKRLGIEEGTVLPRSIIEFYYKADALDDPMVSEEHITAFGWASPQELDDIMALAIRINDFLSGLFLGVGIQLVDFKVECGRLYEGDMMRIVLADEISPDSCRLWDIETKEKMDKDRFRRDMGGLVEAYQEVARRLGIINENEPPRGSGPVLVK.

It belongs to the SAICAR synthetase family.

It catalyses the reaction 5-amino-1-(5-phospho-D-ribosyl)imidazole-4-carboxylate + L-aspartate + ATP = (2S)-2-[5-amino-1-(5-phospho-beta-D-ribosyl)imidazole-4-carboxamido]succinate + ADP + phosphate + 2 H(+). The protein operates within purine metabolism; IMP biosynthesis via de novo pathway; 5-amino-1-(5-phospho-D-ribosyl)imidazole-4-carboxamide from 5-amino-1-(5-phospho-D-ribosyl)imidazole-4-carboxylate: step 1/2. This chain is Phosphoribosylaminoimidazole-succinocarboxamide synthase, found in Rhizobium meliloti (strain 1021) (Ensifer meliloti).